The chain runs to 428 residues: MYKEPFQPTYEYALECDKHDELKDFQTEFYKKEGTIYLDGNSLGLLSKRAEKSLLTLLDSWKEYGIDGWTEGEHPWFFLSEKLGELTAPLIGALPEETIVTGSTTTNIHQVIATFYEPKGIRTKILADELTFPSDIYALQSQIRLKGLDPDEHLVRVKSRDGRTLSEDDIIQAMTDDIALILLPSVLYRSGQILDMKRLTAEAHKRGIHIGFDLCHSIGSIPHHFKEWDVDFAIWCNYKYLNAGPGGVAGLYVNKKHFNRPPGLSGWFSSRKDKQFDMEHTLTAADHAGAYQIGTPHVLSTAPLIGSLEIFKDAGIERLREKSLHITRYMLNLIDHELKDFGFTIGNPFEDEKRGGHIYLEHAEAARICKALKANGVIPDFRAPNGVRLAPVALYNTYEEVWQSVMILKKIMKDEEYKQFENKREVVA.

Pyridoxal 5'-phosphate is bound by residues Thr104, Thr105, 132 to 135, Asp213, His216, and Tyr238; that span reads FPSD. Lys239 is modified (N6-(pyridoxal phosphate)lysine). Pyridoxal 5'-phosphate contacts are provided by Trp267 and Thr295.

Belongs to the kynureninase family. In terms of assembly, homodimer. Pyridoxal 5'-phosphate is required as a cofactor.

It catalyses the reaction L-kynurenine + H2O = anthranilate + L-alanine + H(+). The enzyme catalyses 3-hydroxy-L-kynurenine + H2O = 3-hydroxyanthranilate + L-alanine + H(+). It functions in the pathway amino-acid degradation; L-kynurenine degradation; L-alanine and anthranilate from L-kynurenine: step 1/1. Its pathway is cofactor biosynthesis; NAD(+) biosynthesis; quinolinate from L-kynurenine: step 2/3. Its function is as follows. Catalyzes the cleavage of L-kynurenine (L-Kyn) and L-3-hydroxykynurenine (L-3OHKyn) into anthranilic acid (AA) and 3-hydroxyanthranilic acid (3-OHAA), respectively. In Bacillus cereus (strain ZK / E33L), this protein is Kynureninase.